Consider the following 714-residue polypeptide: P-loop NTPase domain-containing protein LPA1 (714 aa).

Positions methionine 1–lysine 11 are enriched in low complexity. Disordered stretches follow at residues methionine 1–lysine 42, glutamine 259–glutamate 293, and phenylalanine 595–asparagine 689. Positions glutamate 271 to serine 285 are enriched in basic and acidic residues. The span at phenylalanine 595–glutamate 617 shows a compositional bias: acidic residues. A compositionally biased stretch (basic and acidic residues) spans arginine 618–aspartate 636. Residues alanine 659 to glutamate 670 show a composition bias toward polar residues.

Expressed in roots, leaf blade shoots, leaf sheath shoots and panicles.

Required for the accumulation of phytic acid in seeds. Phytic acid is the primary storage form of phosphorus in cereal grains and other plant seeds. The polypeptide is P-loop NTPase domain-containing protein LPA1 (Oryza sativa subsp. japonica (Rice)).